The following is a 532-amino-acid chain: Probable alpha-galactosidase A (532 aa).

Residues 1 to 21 form the signal peptide; the sequence is MDTTKSLLSTLIAIMIPLSLG. An intrachain disulfide couples Cys44 to Cys76. Asn47, Asn91, and Asn121 each carry an N-linked (GlcNAc...) asparagine glycan. A disulfide bond links Cys124 and Cys154. The active-site Nucleophile is Asp152. N-linked (GlcNAc...) asparagine glycosylation occurs at Asn201. Residue Asp210 is the Proton donor of the active site. Positions 410–531 constitute a Ricin B-type lectin domain; it reads CSTVIPTGIV…GLPSGVDIKP (122 aa). 2 disulfide bridges follow: Cys427–Cys441 and Cys466–Cys478.

This sequence belongs to the glycosyl hydrolase 27 family.

The protein resides in the secreted. It carries out the reaction Hydrolysis of terminal, non-reducing alpha-D-galactose residues in alpha-D-galactosides, including galactose oligosaccharides, galactomannans and galactolipids.. Functionally, hydrolyzes a variety of simple alpha-D-galactoside as well as more complex molecules such as oligosaccharides and polysaccharides. This Aspergillus fumigatus (strain ATCC MYA-4609 / CBS 101355 / FGSC A1100 / Af293) (Neosartorya fumigata) protein is Probable alpha-galactosidase A (aglA).